Consider the following 408-residue polypeptide: UPF0761 membrane protein Avin_36810 (408 aa).

6 helical membrane-spanning segments follow: residues 33 to 53 (YTALFAVVPIMTLIFVVLSVV), 92 to 112 (HLTWLGVGVLMVTALLMLMTV), 132 to 152 (FLLHWAILSLGPLLLGTGFAL), 174 to 194 (LLKVMPLLFSTAAFTLLYVAV), 209 to 229 (LFAAVLFEAAKGLFGLYVALF), and 238 to 258 (AFAAVPLFLLWMYLSWMIVLL).

Belongs to the UPF0761 family.

It localises to the cell inner membrane. The chain is UPF0761 membrane protein Avin_36810 from Azotobacter vinelandii (strain DJ / ATCC BAA-1303).